The primary structure comprises 99 residues: Microcin E492 (99 aa).

The N-terminal stretch at 1–15 is a signal peptide; it reads MREISQKDLNLAFGA. Positions 80-99 are disordered; sequence SWNGSGSGYNSATSSSGSGS. The segment covering 87 to 99 has biased composition (low complexity); the sequence is GYNSATSSSGSGS. Serine microcin E492 siderophore ester is present on serine 99.

The protein belongs to the class IIa microcin family. Multimer. Possibly forms a homodimer or a homotrimer. The C-terminal Ser is modified by attachment to a siderophore similar to enterobactin, which can bind one atom of iron. The modification consists of an ester linkage of the serine carboxyl to O6 of a glucose which is linked by a C-glycosidic bond to the 5'-benzoyl of a linear triester of N-(2,3-dihydroxybenzoyl)serine. Presence of the siderophore ester increases the antibacterial activity of the protein.

Its function is as follows. Channel-forming bacteriocin. Forms cation-selective channels. Active on enterobacteria, with highest activity against E.coli. Not active on other Gram-negative bacteria, Gram-positive bacteria or fungi. The unmodified protein is active against E.coli and S.enteritidis. When the siderophore ester is present at Ser-99, antibacterial activity against these species is increased and activity is also detected against E.cloacae and K.pneumoniae. Neutralized by its immunity protein MceB. This Klebsiella pneumoniae protein is Microcin E492.